The following is a 605-amino-acid chain: Capsid scaffolding protein (605 aa).

Residues histidine 52, serine 120, and histidine 139 each act as charge relay system in the active site. The tract at residues 326 to 344 (GEFVLIPTAYYSQLLTGQT) is interaction with pAP. Residues 585–605 (IQGSTADDADMFANQMMVGRC) form an interaction with major capsid protein region.

This sequence belongs to the herpesviridae capsid scaffolding protein family. As to quaternary structure, homomultimer. Interacts with major capsid protein. In terms of assembly, exists in a monomer-dimer equilibrium with the dimer being the active species. In terms of processing, capsid scaffolding protein is cleaved by assemblin after formation of the spherical procapsid. As a result, the capsid obtains its mature, icosahedral shape. Cleavages occur at two or more sites: release (R-site) and maturation (M-site).

The protein localises to the host cytoplasm. The protein resides in the host nucleus. It catalyses the reaction Cleaves -Ala-|-Ser- and -Ala-|-Ala- bonds in the scaffold protein.. In terms of biological role, acts as a scaffold protein by binding major capsid protein in the cytoplasm, inducing the nuclear localization of both proteins. Multimerizes in the nucleus such as major capsid protein forms the icosahedral T=16 capsid. Autocatalytic cleavage releases the assembly protein, and subsequently abolishes interaction with major capsid protein. Cleavages products are evicted from the capsid before or during DNA packaging. Protease that plays an essential role in virion assembly within the nucleus. Catalyzes the cleavage of the assembly protein after formation of the spherical procapsid. By that cleavage, the capsid matures and gains its icosahedral shape. The cleavage sites seem to include -Ala-Ser-, -Ala-Ala-, as well as Ala-Thr bonds. Assemblin and cleavages products are evicted from the capsid before or during DNA packaging. Its function is as follows. Plays a major role in capsid assembly. Acts as a scaffold protein by binding major capsid protein. Multimerizes in the nucleus such as major capsid protein forms the icosahedral T=16 capsid. Cleaved by assemblin after capsid completion. The cleavages products are evicted from the capsid before or during DNA packaging. In Varicella-zoster virus (strain Dumas) (HHV-3), this protein is Capsid scaffolding protein (33).